The sequence spans 155 residues: Putative ATP synthase protein YMF19-like protein (155 aa).

3 consecutive transmembrane segments (helical) span residues 23–43, 89–109, and 117–137; these read FLWL…VLVF, WRAL…LGSF, and VDFG…LFFF.

Belongs to the ATPase protein YMF19 family.

The protein resides in the mitochondrion membrane. This chain is Putative ATP synthase protein YMF19-like protein (YMF18), found in Marchantia polymorpha (Common liverwort).